Consider the following 814-residue polypeptide: Protein kintoun (814 aa).

Low complexity predominate over residues 234 to 246 (AANTARSPASPAP). Disordered regions lie at residues 234 to 259 (AANT…EPRC) and 357 to 490 (ARQE…MGDP). Residues 388 to 404 (AAREESADGTGADHGEK) show a composition bias toward basic and acidic residues. A phosphoserine mark is found at S444 and S618. Positions 654–686 (AGLQGKGKGVREGCPLSEAEAADQSATSPAASD) are disordered. Over residues 675–686 (ADQSATSPAASD) the composition is skewed to low complexity.

This sequence belongs to the PIH1 family. Kintoun subfamily. Interacts with DNAI2 and HSPA1A. Interacts with CFAP300. Interacts with DNAAF4. Interacts with DNAAF6/PIH1D3. As to expression, expressed in nearly all organs of adult, with higher expression in tissues known to have motile cilia and flagella, such as brain and testis.

The protein localises to the cytoplasm. Its subcellular location is the dynein axonemal particle. In terms of biological role, required for cytoplasmic pre-assembly of axonemal dyneins, thereby playing a central role in motility in cilia and flagella. Involved in pre-assembly of dynein arm complexes in the cytoplasm before intraflagellar transport loads them for the ciliary compartment. The polypeptide is Protein kintoun (Mus musculus (Mouse)).